The primary structure comprises 445 residues: uncharacterized protein (445 aa).

8 consecutive transmembrane segments (helical) span residues 16-36 (IVSLGVTASSFLFINGVAFLI), 52-72 (LLASMPSWGLVVTMFAWGYLL), 98-118 (VHSLLWIGVFLFLGGMAAGGC), 168-188 (GLMFPAVVCTLAAVASVLGIV), 219-239 (ASALLMMPQTVTVTFMLVWLI), 243-263 (GWSVAQAGVLVTISQLLGALG), 283-303 (LIAAAAAATLFLLAAVDNEGS), and 366-386 (AAYPTAWALCGVFPLAAVPLV). Residues 417–445 (AWPNGPRRPGPPGQPRRVRQGGTAITPPT) are disordered.

This sequence belongs to the major facilitator superfamily.

The protein resides in the cell membrane. This is an uncharacterized protein from Mycobacterium tuberculosis (strain CDC 1551 / Oshkosh).